Consider the following 81-residue polypeptide: Cytotoxin 4 (81 aa).

The first 21 residues, 1–21 (MKTLLLTLVVVTIVCLDLGYT), serve as a signal peptide directing secretion. Disulfide bonds link C24-C42, C35-C59, C63-C74, and C75-C80.

Belongs to the three-finger toxin family. Short-chain subfamily. Type IA cytotoxin sub-subfamily. Monomer in solution; Homodimer and oligomer in the presence of negatively charged lipids forming a pore with a size ranging between 20 and 30 Angstroms. As to expression, expressed by the venom gland.

It localises to the secreted. The protein localises to the target cell membrane. Basic protein that bind to cell membrane and depolarizes cardiomyocytes. This cytotoxin also shows lytic activities, but 2-fold more important than that of CTX-A2. It binds to the integrin alpha-V/beta-3 with a moderate affinity. Inhibits protein kinase C. It may interact with sulfatides in the cell membrane, which induces pore formation and cell internalization and is responsible for cytotoxicity in cardiomyocytes. It may also target the mitochondrial membrane and induces mitochondrial swelling and fragmentation. The protein is Cytotoxin 4 of Naja atra (Chinese cobra).